The primary structure comprises 431 residues: MAQQKVAVVLGLQWGDEGKGKLVDVLAEDADVVARFAGGNNAGHTVVVDNISYDFHLLPSGIGHAKCDCVIGNGVVIHLPGLYEEVEKNMAKGPHLQGWQSRLKISDRAHLVLDLHQKVDGMKEEERGLDKIGTTKKGIGPTYSSKAIRHGLRVCDLMGDFGIFKQKFLQVVEHYQKLFPSLEVDVDAQLKAFEGYAEKVRPMVTDTTLLVHRYLKENKRVLLEGANATMLDLDFGTYPYVTSSSCCVGGICTGLGLPPQAVGDVYGVVKAYTTRVGDGAFPTEDFAEVGNYLQTKGHEYGVTTGRKRRCGWLDMMVVNYACMINGVTKICLTKLDVLDELETIKIAVAYKKGGEALLGMPASQQVLNEVEVEYVDMPGWQTNISEIRDFEALPTQAQAYVRKVEELSGVPVKWIGVGPAREAMIIVPPRQ.

Residues 15–21 (GDEGKGK) and 43–45 (GHT) contribute to the GTP site. Asp-16 (proton acceptor) is an active-site residue. Mg(2+)-binding residues include Asp-16 and Gly-43. IMP contacts are provided by residues 16 to 19 (DEGK), 41 to 44 (NAGH), Thr-135, Arg-149, Asn-227, Thr-242, and Arg-306. Residue His-44 is the Proton donor of the active site. 302–308 (VTTGRKR) contacts substrate. Residues Arg-308, 334–336 (KLD), and 416–418 (GVG) each bind GTP.

The protein belongs to the adenylosuccinate synthetase family. As to quaternary structure, homodimer. Mg(2+) is required as a cofactor.

It is found in the cytoplasm. The enzyme catalyses IMP + L-aspartate + GTP = N(6)-(1,2-dicarboxyethyl)-AMP + GDP + phosphate + 2 H(+). The protein operates within purine metabolism; AMP biosynthesis via de novo pathway; AMP from IMP: step 1/2. In terms of biological role, plays an important role in the de novo pathway and in the salvage pathway of purine nucleotide biosynthesis. Catalyzes the first committed step in the biosynthesis of AMP from IMP. The polypeptide is Adenylosuccinate synthetase (Monosiga brevicollis (Choanoflagellate)).